We begin with the raw amino-acid sequence, 268 residues long: Energy-coupling factor transporter transmembrane protein EcfT (268 aa).

Transmembrane regions (helical) follow at residues 26-46 (ILAVLFYMVMVFLANSPLSYG), 47-67 (ILIGFIVLGAALAKLPAGLLL), 73-93 (LWIIILLTMVIHFVTDPGEAL), 116-136 (LVLLLLVSSLMTFTTSPIVLT), 151-171 (VPAHELAMMMTIALRFIPTLL), and 246-266 (ALTGLVMLALFVLLAFLRWGI).

It belongs to the energy-coupling factor EcfT family. In terms of assembly, forms a stable energy-coupling factor (ECF) transporter complex composed of 2 membrane-embedded substrate-binding proteins (S component), 2 ATP-binding proteins (A component) and 2 transmembrane proteins (T component). May be able to interact with more than 1 S component at a time.

The protein localises to the cell membrane. Transmembrane (T) component of an energy-coupling factor (ECF) ABC-transporter complex. Unlike classic ABC transporters this ECF transporter provides the energy necessary to transport a number of different substrates. This Acidaminococcus fermentans (strain ATCC 25085 / DSM 20731 / CCUG 9996 / CIP 106432 / VR4) protein is Energy-coupling factor transporter transmembrane protein EcfT.